The chain runs to 194 residues: E3 ubiquitin-protein ligase RNF4 (194 aa).

The segment covering 1-12 has biased composition (basic residues); that stretch reads MSTRNPQRKRRG. The required for ubiquitination activity stretch occupies residues 1 to 20; that stretch reads MSTRNPQRKRRGGTVNSRQT. Positions 1–39 are disordered; it reads MSTRNPQRKRRGGTVNSRQTQKRTRETTSTPEVSLETEP. Positions 6–65 are mediates interaction with TRPS1; the sequence is PQRKRRGGTVNSRQTQKRTRETTSTPEVSLETEPIELVETVGDEIVDLTCESLEPVVVDL. An SUMO interaction motif 1; mediates the binding to polysumoylated substrates motif is present at residues 40–43; the sequence is IELV. An SUMO interaction motif 2; mediates the binding to polysumoylated substrates motif is present at residues 50–53; sequence IVDL. Positions 61–63 match the SUMO interaction motif 3; mediates the binding to polysumoylated substrates motif; sequence VVV. An SUMO interaction motif 4; mediates the binding to polysumoylated substrates motif is present at residues 71 to 74; that stretch reads VVIV. 2 positions are modified to phosphoserine: Ser-98 and Ser-99. Residues 110-130 are disordered; sequence VYVTTHTPRSTKDDGATGPRP. Residues Cys-136, Cys-139, Cys-158, His-160, Cys-163, Cys-166, Cys-177, and Cys-180 each contribute to the Zn(2+) site. The RING-type zinc-finger motif lies at 136 to 181; it reads CPICMDGYSEIVQNGRLIVSTECGHVFCSQCLRDSLKNANTCPTCR.

As to quaternary structure, homodimer (via RING-type zinc finger domain). Interacts with GSC2. Interacts with AR/the androgen receptor and TBP. Interacts with TCF20. Interacts with PATZ1. Interacts with TRPS1; negatively regulates TRPS1 transcriptional repressor activity. Interacts with PML (isoform PML-1, isoform PML-2, isoform PML-3, isoform PML-4, isoform PML-5 and isoform PML-6). Interacts with PRDM1/Blimp-1. In terms of processing, sumoylated; conjugated by one or two SUMO1 moieties. Autoubiquitinated. As to expression, in the embryo, expressed primarily in the developing nervous system with strong expression in the dorsal root ganglia and gonads. Ubiquitously expressed in the adult.

It localises to the cytoplasm. The protein resides in the nucleus. It is found in the PML body. The catalysed reaction is S-ubiquitinyl-[E2 ubiquitin-conjugating enzyme]-L-cysteine + [acceptor protein]-L-lysine = [E2 ubiquitin-conjugating enzyme]-L-cysteine + N(6)-ubiquitinyl-[acceptor protein]-L-lysine.. It functions in the pathway protein modification; protein ubiquitination. Functionally, E3 ubiquitin-protein ligase which binds polysumoylated chains covalently attached to proteins and mediates 'Lys-6'-, 'Lys-11'-, 'Lys-48'- and 'Lys-63'-linked polyubiquitination of those substrates and their subsequent targeting to the proteasome for degradation. Regulates the degradation of several proteins including PML and the transcriptional activator PEA3. Involved in chromosome alignment and spindle assembly, it regulates the kinetochore CENPH-CENPI-CENPK complex by targeting polysumoylated CENPI to proteasomal degradation. Regulates the cellular responses to hypoxia and heat shock through degradation of respectively EPAS1 and PARP1. Alternatively, it may also bind DNA/nucleosomes and have a more direct role in the regulation of transcription for instance enhancing basal transcription and steroid receptor-mediated transcriptional activation. Catalyzes ubiquitination of sumoylated PARP1 in response to PARP1 trapping to chromatin, leading to PARP1 removal from chromatin by VCP/p97. In Mus musculus (Mouse), this protein is E3 ubiquitin-protein ligase RNF4.